We begin with the raw amino-acid sequence, 428 residues long: Endoplasmic reticulum junction formation protein lunapark (428 aa).

Residue G2 is the site of N-myristoyl glycine attachment. Residues 2–45 (GGLFSRWRTKLSTVEVLESIDKEIQALEEFREKNQRLQKLRVGR) lie on the Cytoplasmic side of the membrane. The stretch at 16 to 43 (EVLESIDKEIQALEEFREKNQRLQKLRV) forms a coiled coil. The chain crosses the membrane as a helical span at residues 46-66 (LILYSSVLYLFTCLIVYLWYL). The Lumenal segment spans residues 67-77 (PDEFTARLAMT). The chain crosses the membrane as a helical span at residues 78–98 (LPFFAFPLIIWSIRTVIIFFF). Residues 99 to 428 (SKRTERNNEA…ELNGESLTAE (330 aa)) are Cytoplasmic-facing. Residues 102–128 (TERNNEALDDLKSQRKKILEEVMEKET) are a coiled coil. Phosphoserine is present on residues S114, S153, S177, S182, and S194. Residues 143–248 (SKKAKECEPP…PPGPPLARPI (106 aa)) are disordered. Pro residues predominate over residues 185 to 198 (QGPPPQVPVSPGPP). 2 positions are modified to phosphothreonine: T211 and T213. 2 positions are modified to phosphoserine: S217 and S227. The C4-type; plays a role in ER morphology zinc finger occupies 276–301 (CQQCFSHNGMALKEEFEYIAFRCAYC). Phosphoserine is present on residues S321, S353, and S384. Positions 361–428 (NNTEQTDDKI…ELNGESLTAE (68 aa)) are disordered. Over residues 386 to 401 (SEEPEEKQETENEEAS) the composition is skewed to acidic residues. Residue S414 is modified to Phosphoserine.

This sequence belongs to the lunapark family. Homodimer; homodimerization requires the C4-type zinc finger motif and decreases during mitosis in a phosphorylation-dependent manner. Post-translationally, myristoylated; myristoylation is necessary for the endoplasmic reticulum (ER) three-way ER tubular junction formation, but is not required neither for membrane translocation, membrane topology formation, nor for the specific localization to ER membranes. In terms of processing, phosphorylated. Phosphorylation occurs at Ser-177, Ser-182, Ser-217, Ser-227, Ser-321 and Ser-384 during interphase. Phosphorylation occurs at Ser-114, Ser-153, Ser-194, Thr-211 and Ser-353 during mitosis; these phosphorylations reduce both its homodimerization and the ER three-way tubular junction formation. Subject to proteasomal degradation following phosphorylation during mitosis.

It localises to the endoplasmic reticulum membrane. Functionally, endoplasmic reticulum (ER)-shaping membrane protein that plays a role in determining ER morphology. Involved in the stabilization of nascent three-way ER tubular junctions within the ER network. May also play a role as a curvature-stabilizing protein within three-way ER tubular junction network. May be involved in limb and central nervous system development. This Pongo abelii (Sumatran orangutan) protein is Endoplasmic reticulum junction formation protein lunapark.